A 325-amino-acid polypeptide reads, in one-letter code: Phenylalanine--tRNA ligase alpha subunit (325 aa).

Position 251 (Glu-251) interacts with Mg(2+).

It belongs to the class-II aminoacyl-tRNA synthetase family. Phe-tRNA synthetase alpha subunit type 1 subfamily. Tetramer of two alpha and two beta subunits. Requires Mg(2+) as cofactor.

It localises to the cytoplasm. The enzyme catalyses tRNA(Phe) + L-phenylalanine + ATP = L-phenylalanyl-tRNA(Phe) + AMP + diphosphate + H(+). The chain is Phenylalanine--tRNA ligase alpha subunit (pheS) from Thermotoga maritima (strain ATCC 43589 / DSM 3109 / JCM 10099 / NBRC 100826 / MSB8).